The following is a 680-amino-acid chain: DNA-directed RNA polymerase subunit beta' (680 aa).

Zn(2+) is bound by residues Cys69, Cys71, Cys87, and Cys90. Mg(2+) contacts are provided by Asp489, Asp491, and Asp493.

It belongs to the RNA polymerase beta' chain family. RpoC1 subfamily. As to quaternary structure, in plastids the minimal PEP RNA polymerase catalytic core is composed of four subunits: alpha, beta, beta', and beta''. When a (nuclear-encoded) sigma factor is associated with the core the holoenzyme is formed, which can initiate transcription. The cofactor is Mg(2+). Zn(2+) serves as cofactor.

The protein localises to the plastid. Its subcellular location is the chloroplast. It catalyses the reaction RNA(n) + a ribonucleoside 5'-triphosphate = RNA(n+1) + diphosphate. In terms of biological role, DNA-dependent RNA polymerase catalyzes the transcription of DNA into RNA using the four ribonucleoside triphosphates as substrates. The sequence is that of DNA-directed RNA polymerase subunit beta' from Arabis hirsuta (Hairy rock-cress).